Consider the following 131-residue polypeptide: Leptin receptor overlapping transcript-like 1 (131 aa).

Transmembrane regions (helical) follow at residues 7–27 (LISL…GCAL), 32–52 (QYWP…YCIA), 69–89 (LAIF…IVFA), and 100–120 (ALVL…FLVF).

This sequence belongs to the OB-RGRP/VPS55 family.

Its subcellular location is the membrane. Negatively regulates growth hormone (GH) receptor cell surface expression in liver. May play a role in liver resistance to GH during periods of reduced nutrient availability. The sequence is that of Leptin receptor overlapping transcript-like 1 (LEPROTL1) from Bos taurus (Bovine).